A 334-amino-acid chain; its full sequence is Protein-methionine-sulfoxide reductase catalytic subunit MsrP (334 aa).

The segment at residues 1–44 (MKKIRPLTEADVTAESAFFMQRRQVLKALGISAAALSLPSTAQA) is a signal peptide (tat-type signal). Residues N88, 91-92 (YE), C146, T181, N233, R238, and 249-251 (GIK) contribute to the Mo-molybdopterin site.

The protein belongs to the MsrP family. Heterodimer of a catalytic subunit (MsrP) and a heme-binding subunit (MsrQ). Requires Mo-molybdopterin as cofactor. Predicted to be exported by the Tat system. The position of the signal peptide cleavage has not been experimentally proven.

It is found in the periplasm. The enzyme catalyses L-methionyl-[protein] + a quinone + H2O = L-methionyl-(S)-S-oxide-[protein] + a quinol. It carries out the reaction L-methionyl-[protein] + a quinone + H2O = L-methionyl-(R)-S-oxide-[protein] + a quinol. Its function is as follows. Part of the MsrPQ system that repairs oxidized periplasmic proteins containing methionine sulfoxide residues (Met-O), using respiratory chain electrons. Thus protects these proteins from oxidative-stress damage caused by reactive species of oxygen and chlorine generated by the host defense mechanisms. MsrPQ is essential for the maintenance of envelope integrity under bleach stress, rescuing a wide series of structurally unrelated periplasmic proteins from methionine oxidation, including the primary periplasmic chaperone SurA and the lipoprotein Pal. The catalytic subunit MsrP is non-stereospecific, being able to reduce both (R-) and (S-) diastereoisomers of methionine sulfoxide. This is Protein-methionine-sulfoxide reductase catalytic subunit MsrP from Salmonella agona (strain SL483).